Reading from the N-terminus, the 208-residue chain is Guanylate kinase (208 aa).

Residues 4 to 185 (GNLYILSAPS…ALADLVHILR (182 aa)) enclose the Guanylate kinase-like domain. ATP is bound at residue 11-18 (APSGAGKS).

This sequence belongs to the guanylate kinase family.

It is found in the cytoplasm. It carries out the reaction GMP + ATP = GDP + ADP. Essential for recycling GMP and indirectly, cGMP. This chain is Guanylate kinase, found in Mannheimia succiniciproducens (strain KCTC 0769BP / MBEL55E).